The primary structure comprises 229 residues: uncharacterized protein (229 aa).

7 consecutive transmembrane segments (helical) span residues 6 to 26 (LFFV…FLPT), 36 to 56 (LVSV…ILLA), 80 to 99 (SVYD…HRIY), 114 to 134 (VLSV…HLII), 144 to 164 (IFEY…ATML), 174 to 194 (FYYH…IYKF), and 207 to 224 (YVEA…VLSS).

The protein belongs to the mimivirus L68/R809 family.

It is found in the membrane. This is an uncharacterized protein from Acanthamoeba polyphaga (Amoeba).